Here is a 142-residue protein sequence, read N- to C-terminus: uncharacterized protein (142 aa).

Residues 18–137 (QSRSYSCGPA…RIFTGNVLVV (120 aa)) form the Peptidase C39 domain.

This is an uncharacterized protein from Methanothermobacter thermautotrophicus (strain ATCC 29096 / DSM 1053 / JCM 10044 / NBRC 100330 / Delta H) (Methanobacterium thermoautotrophicum).